The following is a 200-amino-acid chain: Small ribosomal subunit protein uS4 (200 aa).

An S4 RNA-binding domain is found at R106–I170. Positions A178–E200 are disordered. A compositionally biased stretch (basic and acidic residues) spans E179–A190.

Belongs to the universal ribosomal protein uS4 family. As to quaternary structure, part of the 30S ribosomal subunit. Contacts protein S5. The interaction surface between S4 and S5 is involved in control of translational fidelity.

In terms of biological role, one of the primary rRNA binding proteins, it binds directly to 16S rRNA where it nucleates assembly of the body of the 30S subunit. With S5 and S12 plays an important role in translational accuracy. The protein is Small ribosomal subunit protein uS4 of Thermoplasma volcanium (strain ATCC 51530 / DSM 4299 / JCM 9571 / NBRC 15438 / GSS1).